We begin with the raw amino-acid sequence, 64 residues long: Large ribosomal subunit protein bL35 (64 aa).

Basic residues-rich tracts occupy residues 1–15 (MPKAKTHSGASKRFR) and 23–33 (VRQKANRRHLL). The interval 1–47 (MPKAKTHSGASKRFRTTGSGKIVRQKANRRHLLEHKPTSRTRRLDGR) is disordered. Over residues 34-46 (EHKPTSRTRRLDG) the composition is skewed to basic and acidic residues.

The protein belongs to the bacterial ribosomal protein bL35 family.

This chain is Large ribosomal subunit protein bL35, found in Mycobacteroides abscessus (strain ATCC 19977 / DSM 44196 / CCUG 20993 / CIP 104536 / JCM 13569 / NCTC 13031 / TMC 1543 / L948) (Mycobacterium abscessus).